A 512-amino-acid polypeptide reads, in one-letter code: Probable DNA ligase (512 aa).

Position 208 (glutamate 208) interacts with ATP. Lysine 210 (N6-AMP-lysine intermediate) is an active-site residue. Residues arginine 215, arginine 230, glutamate 259, phenylalanine 299, arginine 374, and lysine 380 each coordinate ATP.

Belongs to the ATP-dependent DNA ligase family. The cofactor is Mg(2+).

The catalysed reaction is ATP + (deoxyribonucleotide)n-3'-hydroxyl + 5'-phospho-(deoxyribonucleotide)m = (deoxyribonucleotide)n+m + AMP + diphosphate.. Functionally, DNA ligase that seals nicks in double-stranded DNA during DNA replication, DNA recombination and DNA repair. The sequence is that of Probable DNA ligase from Streptomyces coelicolor (strain ATCC BAA-471 / A3(2) / M145).